The chain runs to 171 residues: UPF0690 protein C1orf52 homolog A (171 aa).

Disordered regions lie at residues 1–56 and 126–171; these read MAAE…GPDE and NVYQ…KRKV. The segment covering 47–56 has biased composition (basic and acidic residues); it reads EAKKLPGPDE. Residues 146–160 show a composition bias toward acidic residues; that stretch reads EEEAQEDSPPSDDEQ.

This sequence belongs to the UPF0690 family.

The protein is UPF0690 protein C1orf52 homolog A of Xenopus laevis (African clawed frog).